The sequence spans 402 residues: Deoxyguanosinetriphosphate triphosphohydrolase-like protein (402 aa).

The segment at 20 to 39 is disordered; it reads PAFSRGRLVPEPESPTRTPF. The region spanning 73 to 217 is the HD domain; it reads RLTHTIEVAQ…AAIADDIAYN (145 aa).

It belongs to the dGTPase family. Type 2 subfamily.

This is Deoxyguanosinetriphosphate triphosphohydrolase-like protein from Brucella canis (strain ATCC 23365 / NCTC 10854 / RM-666).